The chain runs to 440 residues: Thymidine phosphorylase (440 aa).

Belongs to the thymidine/pyrimidine-nucleoside phosphorylase family. As to quaternary structure, homodimer.

The enzyme catalyses thymidine + phosphate = 2-deoxy-alpha-D-ribose 1-phosphate + thymine. The protein operates within pyrimidine metabolism; dTMP biosynthesis via salvage pathway; dTMP from thymine: step 1/2. In terms of biological role, the enzymes which catalyze the reversible phosphorolysis of pyrimidine nucleosides are involved in the degradation of these compounds and in their utilization as carbon and energy sources, or in the rescue of pyrimidine bases for nucleotide synthesis. The polypeptide is Thymidine phosphorylase (Burkholderia pseudomallei (strain 1106a)).